The following is a 252-amino-acid chain: 2-succinyl-6-hydroxy-2,4-cyclohexadiene-1-carboxylate synthase (252 aa).

This sequence belongs to the AB hydrolase superfamily. MenH family. In terms of assembly, monomer.

It catalyses the reaction 5-enolpyruvoyl-6-hydroxy-2-succinyl-cyclohex-3-ene-1-carboxylate = (1R,6R)-6-hydroxy-2-succinyl-cyclohexa-2,4-diene-1-carboxylate + pyruvate. Its pathway is quinol/quinone metabolism; 1,4-dihydroxy-2-naphthoate biosynthesis; 1,4-dihydroxy-2-naphthoate from chorismate: step 3/7. It functions in the pathway quinol/quinone metabolism; menaquinone biosynthesis. Catalyzes a proton abstraction reaction that results in 2,5-elimination of pyruvate from 2-succinyl-5-enolpyruvyl-6-hydroxy-3-cyclohexene-1-carboxylate (SEPHCHC) and the formation of 2-succinyl-6-hydroxy-2,4-cyclohexadiene-1-carboxylate (SHCHC). This chain is 2-succinyl-6-hydroxy-2,4-cyclohexadiene-1-carboxylate synthase, found in Salmonella heidelberg (strain SL476).